The sequence spans 97 residues: Serine protease inhibitor Kazal-type 8 (97 aa).

A signal peptide spans 1–21; sequence MKGICSDAILVLATSMWMAFA. Residues 36–96 form the Kazal-like domain; sequence DKTIVECLKN…TKLYDGQCEN (61 aa). 3 disulfide bridges follow: C42–C76, C49–C73, and C62–C94. N85 carries N-linked (GlcNAc...) asparagine glycosylation.

The protein localises to the secreted. Functionally, probable serine protease inhibitor. The polypeptide is Serine protease inhibitor Kazal-type 8 (SPINK8) (Homo sapiens (Human)).